We begin with the raw amino-acid sequence, 215 residues long: Phosphatidylserine decarboxylase proenzyme (215 aa).

S183 serves as the catalytic Schiff-base intermediate with substrate; via pyruvic acid. Residue S183 is modified to Pyruvic acid (Ser); by autocatalysis.

Belongs to the phosphatidylserine decarboxylase family. PSD-A subfamily. In terms of assembly, heterodimer of a large membrane-associated beta subunit and a small pyruvoyl-containing alpha subunit. Pyruvate serves as cofactor. Post-translationally, is synthesized initially as an inactive proenzyme. Formation of the active enzyme involves a self-maturation process in which the active site pyruvoyl group is generated from an internal serine residue via an autocatalytic post-translational modification. Two non-identical subunits are generated from the proenzyme in this reaction, and the pyruvate is formed at the N-terminus of the alpha chain, which is derived from the carboxyl end of the proenzyme. The post-translation cleavage follows an unusual pathway, termed non-hydrolytic serinolysis, in which the side chain hydroxyl group of the serine supplies its oxygen atom to form the C-terminus of the beta chain, while the remainder of the serine residue undergoes an oxidative deamination to produce ammonia and the pyruvoyl prosthetic group on the alpha chain.

The protein resides in the cell membrane. It carries out the reaction a 1,2-diacyl-sn-glycero-3-phospho-L-serine + H(+) = a 1,2-diacyl-sn-glycero-3-phosphoethanolamine + CO2. It functions in the pathway phospholipid metabolism; phosphatidylethanolamine biosynthesis; phosphatidylethanolamine from CDP-diacylglycerol: step 2/2. Catalyzes the formation of phosphatidylethanolamine (PtdEtn) from phosphatidylserine (PtdSer). The protein is Phosphatidylserine decarboxylase proenzyme of Symbiobacterium thermophilum (strain DSM 24528 / JCM 14929 / IAM 14863 / T).